Consider the following 88-residue polypeptide: Hemotin (88 aa).

The Lumenal segment spans residues 1-14 (MDCFKVFEVVFQSE). Residues 15-37 (INPLLLIPAVATIALTLCCYCYH) traverse the membrane as a helical segment. The Cytoplasmic portion of the chain corresponds to 38–88 (GYQWIRDRRTARIEEQQAQLPLPLSRISITPGCSMVATTKLTHSRNSVDIY).

As to quaternary structure, interacts with 14-3-3zeta. In terms of tissue distribution, expressed in hemocytes.

It is found in the early endosome membrane. Its function is as follows. Negatively regulates early endosome maturation by binding to and repressing the activity of 14-3-3zeta which prevents the 14-3-3zeta-mediated activation of phosphoinositide 3-kinase Pi3K68D. This, in turn, inhibits the Pi3K68D-mediated conversion of phosphatidylinositol to phosphatidylinositol-3-phosphate and prevents progression of early endosomes through the maturation process which regulates subsequent steps of phagocytic processing. The polypeptide is Hemotin (Drosophila melanogaster (Fruit fly)).